A 155-amino-acid polypeptide reads, in one-letter code: Lectin-like protein EP153R (155 aa).

At 1–30 (MYFKKKYIGLIDKNCEKKILDDCTTIKICY) the chain is on the cytoplasmic side. Residues 31-51 (ILIGILIGTNMITLIYNFIFW) form a helical membrane-spanning segment. The Extracellular segment spans residues 52–155 (DHYMTCNKKD…YLPLLFICSK (104 aa)). Cysteines 66 and 77 form a disulfide. The lectin-like stretch occupies residues 66-154 (CPKDWVGYNN…KYLPLLFICS (89 aa)). 8 N-linked (GlcNAc...) asparagine; by host glycosylation sites follow: asparagine 82, asparagine 86, asparagine 98, asparagine 104, asparagine 110, asparagine 124, asparagine 130, and asparagine 137. Cysteines 94 and 153 form a disulfide.

Belongs to the asfivirus lectin-like protein family. As to quaternary structure, homodimer.

Its subcellular location is the host endoplasmic reticulum membrane. Functionally, down-regulates MHC-I expression by impairing the appropriate configuration or presentation into the plasma membrane of the latter. Participates in viral hemadsorption, which may help viral spread. Reduces the transactivating activity of host TP53, thus inhibiting apoptosis. Non-essential for virus growth in swine macrophage cell cultures. This Ornithodoros (relapsing fever ticks) protein is Lectin-like protein EP153R.